A 720-amino-acid chain; its full sequence is ABC transporter G family member STR2 (720 aa).

Residues 1–467 (MRHANGRRGD…NFINIRRTPE (467 aa)) are Cytoplasmic-facing. In terms of domain architecture, ABC transporter spans 25-274 (LEFSNLTYTV…LGRMGRKVPK (250 aa)). 70-77 (GPSGAGKS) contributes to the ATP binding site. The tract at residues 313-346 (GAHEMSIVPPSPAPSHREGRGHDRSNKRLHLKDQ) is disordered. The segment covering 327 to 346 (SHREGRGHDRSNKRLHLKDQ) has biased composition (basic and acidic residues). The helical transmembrane segment at 468-488 (LFLSRLVVLTVMGIMMATMFM) threads the bilayer. Topologically, residues 489–502 (HPKKNLQGITNRLS) are extracellular. The helical transmembrane segment at 503–523 (FFIFTVCLFFFSSNDAVPAFI) threads the bilayer. Residues 524–547 (QERFIFVRETSHNKYRASSYTIAG) lie on the Cytoplasmic side of the membrane. Residues 548-568 (LITYLPFLAVQAAVYAVIVWF) traverse the membrane as a helical segment. Residues 569-575 (ALSLRGP) lie on the Extracellular side of the membrane. The helical transmembrane segment at 576–596 (FIYFLIVLYMSLLSTNSFVVF) threads the bilayer. Residues 597–604 (VSSVVPNY) are Cytoplasmic-facing. A helical membrane pass occupies residues 605-625 (ILGYAAVIAFTALFFLFCGYF). Residues 626-693 (LNSHDMPQYW…QVESKKWEKV (68 aa)) lie on the Extracellular side of the membrane. N-linked (GlcNAc...) asparagine glycosylation occurs at N681. A helical membrane pass occupies residues 694 to 714 (YIMLAWAIVYRILFYIVLRFF). Residues 715-720 (SKNQRT) lie on the Cytoplasmic side of the membrane.

Belongs to the ABC transporter superfamily. ABCG family. Stunted arbuscule (STR) subfamily. Heterodimerizes with STR; the resulting transporter is located in the peri-arbuscular membrane.

The protein localises to the cell membrane. In terms of biological role, together with STR, required for arbuscule development in arbuscular mycorrhizal (AM) symbiosis. This is ABC transporter G family member STR2 from Petunia hybrida (Petunia).